Consider the following 302-residue polypeptide: MASSDGDRLCRSNAVRRKTTPSYSGQYRTARRSVVVGPPDDSDDSLGYITTVGADSPSPVYADLYFEHKNTTPRVHQPNDSSGSEDDFEDIDEVVAAFREARLRHELVEDAVYENPLSVEKPSRSFTKNAAVKPKLEDSPKRAPPGAGAIASGRPISFSTAPKTATSSWCGPTPSYNKRVFCEAVRRVAAMQAQKAAEAAWNSNPPRNNAELDRLLTGAVIRITVHEGLNLIQAANEADLGEGASVSKRGHNRKTGDLQGGMGNEPMYAQVRKPKSRTDTQTTGRITNRSRARSASRTDTRK.

Residues 1-10 (MASSDGDRLC) show a composition bias toward basic and acidic residues. Disordered regions lie at residues 1 to 42 (MASS…PDDS) and 125 to 170 (SFTK…SSWC). The interaction with gE stretch occupies residues 154-244 (RPISFSTAPK…ANEADLGEGA (91 aa)). Over residues 157 to 170 (SFSTAPKTATSSWC) the composition is skewed to polar residues. The Nuclear export signal signature appears at 212–224 (LDRLLTGAVIRIT). Residues 243–302 (GASVSKRGHNRKTGDLQGGMGNEPMYAQVRKPKSRTDTQTTGRITNRSRARSASRTDTRK) are disordered.

Belongs to the alphaherpesvirinae VP22 tegument protein family. In terms of assembly, interacts with gE (via C-terminus); this interaction is necessary for the recruitment of VP22/ORF9 to the Golgi and its packaging into virions. Interacts with gM (via C-terminus). Interacts with VP16/ORF10; this interaction allows the formation of a tripartite complex composed of VP16/ORF10, VP22/ORF9 and VHS/ORF17. Interacts with the capsid-binding protein ORF44. Interacts with host CGAS. Highly phosphorylated in the host cell. Packaging is selective for underphosphorylated forms.

It is found in the virion tegument. Its subcellular location is the host cytoplasm. It localises to the host nucleus. The protein resides in the host Golgi apparatus. Its function is as follows. Tegument protein that plays different roles during the time course of infection. Participates in both the accumulation of viral mRNAs and viral protein translation at late time of infection. Modulates the RNase activity of the virion host shutoff protein ORF17 probably to ensure necessary levels of key cellular mRNAs and proteins. Plays a role in microtubule reorganization that occurs after viral infection by stabilizing microtubule network. Plays a role in the inhibition of host innate immune system by targeting the CGAS enzymatic activity which is the principal cytosolic DNA sensor that detects invading viral DNA. Acts by mediating disruption of liquid-like droplets in which CGAS is activated, thereby preventing CGAS activity. The polypeptide is Tegument protein VP22 (Homo sapiens (Human)).